A 673-amino-acid chain; its full sequence is Ion-translocating oxidoreductase complex subunit C (673 aa).

4Fe-4S ferredoxin-type domains lie at 368-397 and 407-436; these read MGAPQEETSCIRCSACADACPADLLPQQLY and KATAHHIADCIECGACAWVCPSNIPLVQYF. Residues cysteine 377, cysteine 380, cysteine 383, cysteine 387, cysteine 416, cysteine 419, cysteine 422, and cysteine 426 each coordinate [4Fe-4S] cluster. Residues 529–554 are disordered; that stretch reads EARKAQARAKQAGHPMADSATSGDDP.

The protein belongs to the 4Fe4S bacterial-type ferredoxin family. RnfC subfamily. As to quaternary structure, the complex is composed of six subunits: RsxA, RsxB, RsxC, RsxD, RsxE and RsxG. [4Fe-4S] cluster is required as a cofactor.

Its subcellular location is the cell inner membrane. Functionally, part of a membrane-bound complex that couples electron transfer with translocation of ions across the membrane. Required to maintain the reduced state of SoxR. The protein is Ion-translocating oxidoreductase complex subunit C of Salmonella arizonae (strain ATCC BAA-731 / CDC346-86 / RSK2980).